We begin with the raw amino-acid sequence, 156 residues long: 6,7-dimethyl-8-ribityllumazine synthase (156 aa).

Residues Phe23, 57 to 59 (AFE), and 81 to 83 (AVI) each bind 5-amino-6-(D-ribitylamino)uracil. 86–87 (AT) lines the (2S)-2-hydroxy-3-oxobutyl phosphate pocket. His89 acts as the Proton donor in catalysis. Phe114 is a 5-amino-6-(D-ribitylamino)uracil binding site. Position 128 (Arg128) interacts with (2S)-2-hydroxy-3-oxobutyl phosphate.

The protein belongs to the DMRL synthase family.

The catalysed reaction is (2S)-2-hydroxy-3-oxobutyl phosphate + 5-amino-6-(D-ribitylamino)uracil = 6,7-dimethyl-8-(1-D-ribityl)lumazine + phosphate + 2 H2O + H(+). It functions in the pathway cofactor biosynthesis; riboflavin biosynthesis; riboflavin from 2-hydroxy-3-oxobutyl phosphate and 5-amino-6-(D-ribitylamino)uracil: step 1/2. In terms of biological role, catalyzes the formation of 6,7-dimethyl-8-ribityllumazine by condensation of 5-amino-6-(D-ribitylamino)uracil with 3,4-dihydroxy-2-butanone 4-phosphate. This is the penultimate step in the biosynthesis of riboflavin. This Sulfurovum sp. (strain NBC37-1) protein is 6,7-dimethyl-8-ribityllumazine synthase.